Reading from the N-terminus, the 240-residue chain is Small ribosomal subunit protein eS4 (240 aa).

Positions 37–99 constitute an S4 RNA-binding domain; the sequence is VPLVVLLRDV…RGEFFRVFPD (63 aa).

It belongs to the eukaryotic ribosomal protein eS4 family.

This chain is Small ribosomal subunit protein eS4, found in Halorubrum lacusprofundi (strain ATCC 49239 / DSM 5036 / JCM 8891 / ACAM 34).